The sequence spans 636 residues: Epithelial sodium channel subunit alpha (636 aa).

Residues methionine 1 to alanine 28 form a disordered region. Residues methionine 1–threonine 77 are Cytoplasmic-facing. Residues alanine 78–isoleucine 98 form a helical membrane-spanning segment. The Extracellular segment spans residues tyrosine 99–serine 549. Disulfide bonds link cysteine 126–cysteine 293, cysteine 218–cysteine 225, cysteine 270–cysteine 277, cysteine 381–cysteine 466, cysteine 403–cysteine 443, cysteine 403–cysteine 462, cysteine 407–cysteine 458, cysteine 416–cysteine 443, cysteine 416–cysteine 466, and cysteine 418–cysteine 432. A helical membrane pass occupies residues valine 550 to leucine 570. Topologically, residues alanine 571 to glutamate 636 are cytoplasmic.

The protein belongs to the amiloride-sensitive sodium channel (TC 1.A.6) family. SCNN1A subfamily. Heterotrimer; containing an alpha/SCNN1A, a beta/SCNN1B and a gamma/SCNN1G subunit.

It localises to the apical cell membrane. It is found in the cell projection. The protein resides in the cilium. The protein localises to the cytoplasmic granule. Its subcellular location is the cytoplasm. It localises to the cytoplasmic vesicle. It is found in the secretory vesicle. The protein resides in the acrosome. The protein localises to the flagellum. It carries out the reaction Na(+)(in) = Na(+)(out). With respect to regulation, originally identified and characterized by its inhibition by the diuretic drug amiloride. Its function is as follows. This is one of the three pore-forming subunits of the heterotrimeric epithelial sodium channel (ENaC), a critical regulator of sodium balance and fluid homeostasis. ENaC operates in epithelial tissues, where it mediates the electrodiffusion of sodium ions from extracellular fluid through the apical membrane of cells, with water following osmotically. The protein is Epithelial sodium channel subunit alpha of Anolis carolinensis (Green anole).